The primary structure comprises 97 residues: Large ribosomal subunit protein uL23 (97 aa).

This sequence belongs to the universal ribosomal protein uL23 family. As to quaternary structure, part of the 50S ribosomal subunit. Contacts protein L29, and trigger factor when it is bound to the ribosome.

Its function is as follows. One of the early assembly proteins it binds 23S rRNA. One of the proteins that surrounds the polypeptide exit tunnel on the outside of the ribosome. Forms the main docking site for trigger factor binding to the ribosome. The sequence is that of Large ribosomal subunit protein uL23 from Myxococcus xanthus (strain DK1622).